Consider the following 201-residue polypeptide: uncharacterized protein (201 aa).

Residues 11-31 (IWKSLYLLIIVGMLYIGYILI) form a helical membrane-spanning segment.

Its subcellular location is the membrane. This is an uncharacterized protein from Rickettsia prowazekii (strain Madrid E).